The following is a 560-amino-acid chain: Formate--tetrahydrofolate ligase (560 aa).

69-76 (TPAGEGKS) lines the ATP pocket.

It belongs to the formate--tetrahydrofolate ligase family.

The catalysed reaction is (6S)-5,6,7,8-tetrahydrofolate + formate + ATP = (6R)-10-formyltetrahydrofolate + ADP + phosphate. Its pathway is one-carbon metabolism; tetrahydrofolate interconversion. The sequence is that of Formate--tetrahydrofolate ligase from Listeria welshimeri serovar 6b (strain ATCC 35897 / DSM 20650 / CCUG 15529 / CIP 8149 / NCTC 11857 / SLCC 5334 / V8).